The chain runs to 549 residues: Cation/acetate symporter ActP (549 aa).

Transmembrane regions (helical) follow at residues 33-53 (WQAI…TYWA), 77-97 (LAIA…ALVF), 103-123 (GLIY…LIAE), 148-168 (ILSA…QMVG), 183-203 (IAVV…GMLA), 206-226 (WVQI…AFMV), 262-282 (ISAL…PHIL), 303-323 (GFMG…IMLV), 355-375 (LFLG…VAGL), 404-424 (VSKI…VLFE), 428-448 (IAFM…PIIL), 464-484 (GGWL…TIWV), and 493-513 (IFPY…GIWF).

The protein belongs to the sodium:solute symporter (SSF) (TC 2.A.21) family.

Its subcellular location is the cell inner membrane. Transports acetate. The protein is Cation/acetate symporter ActP of Salmonella agona (strain SL483).